Reading from the N-terminus, the 79-residue chain is Small ribosomal subunit protein uS17 (79 aa).

This sequence belongs to the universal ribosomal protein uS17 family. Part of the 30S ribosomal subunit.

Functionally, one of the primary rRNA binding proteins, it binds specifically to the 5'-end of 16S ribosomal RNA. The chain is Small ribosomal subunit protein uS17 from Mesorhizobium japonicum (strain LMG 29417 / CECT 9101 / MAFF 303099) (Mesorhizobium loti (strain MAFF 303099)).